The primary structure comprises 308 residues: Mitochondrial import receptor subunit TOM40B (308 aa).

The interval 1–29 is disordered; it reads MGNTLGLAPMGTLPRRSHRREEPLPNPGS. The tract at residues 281-308 is required for mitochondrial targeting; that stretch reads PLPVTLALGAFLNHWRNRFHCGFSITVG.

This sequence belongs to the Tom40 family. As to quaternary structure, forms part of the preprotein translocase of the outer mitochondrial membrane (TOM complex) containing TOMM22, TOMM40, TOMM40L and TOMM70. Interacts with mitochondrial targeting sequences.

It localises to the mitochondrion outer membrane. Potential channel-forming protein implicated in import of protein precursors into mitochondria. This is Mitochondrial import receptor subunit TOM40B (Tomm40l) from Mus musculus (Mouse).